A 517-amino-acid chain; its full sequence is Ubiquitin carboxyl-terminal hydrolase 30 (517 aa).

The Mitochondrial intermembrane portion of the chain corresponds to 1–35; it reads MLSSRAEAAMTAADRAIQRFLRTGAAVRYKVMKNW. The helical transmembrane segment at 36-56 threads the bilayer; it reads GVIGGIAAALAAGIYVIWGPI. At 57–517 the chain is on the cytoplasmic side; the sequence is TERKKRRKGL…HQSQECKSEE (461 aa). The USP domain maps to 68-502; it reads PGLVNLGNTC…SAYLLFYERV (435 aa). Catalysis depends on Cys77, which acts as the Nucleophile. Glycyl lysine isopeptide (Lys-Gly) (interchain with G-Cter in ubiquitin) cross-links involve residues Lys235 and Lys289. A disordered region spans residues 364-395; that stretch reads SQHNPKLNKNPGPTLELQDGPGAPTPVLNQPG. The active-site Proton acceptor is the His452.

It belongs to the peptidase C19 family. Post-translationally, ubiquitinated by parkin (PRKN) at Lys-235 and Lys-289, leading to its degradation. As to expression, expressed in skeletal muscle, pancreas, liver and kidney.

Its subcellular location is the mitochondrion outer membrane. It carries out the reaction Thiol-dependent hydrolysis of ester, thioester, amide, peptide and isopeptide bonds formed by the C-terminal Gly of ubiquitin (a 76-residue protein attached to proteins as an intracellular targeting signal).. Inhibited by the diterpenoid derivative 15-oxospiramilactone (S3). Its function is as follows. Deubiquitinating enzyme tethered to the mitochondrial outer membrane that acts as a key inhibitor of mitophagy by counteracting the action of parkin (PRKN): hydrolyzes ubiquitin attached by parkin on target proteins, such as RHOT1/MIRO1 and TOMM20, thereby blocking parkin's ability to drive mitophagy. Preferentially cleaves 'Lys-6'- and 'Lys-11'-linked polyubiquitin chains, 2 types of linkage that participate in mitophagic signaling. Does not cleave efficiently polyubiquitin phosphorylated at 'Ser-65'. Acts as a negative regulator of mitochondrial fusion by mediating deubiquitination of MFN1 and MFN2. This Homo sapiens (Human) protein is Ubiquitin carboxyl-terminal hydrolase 30.